The chain runs to 449 residues: Myb family transcription factor PHL6 (449 aa).

Positions 49–72 are disordered; the sequence is PFIRSQSPDSPGQLWPKNSSQSTF. The region spanning 238-298 is the HTH myb-type domain; sequence ANQKSRMRWT…HLQKYRLAKY (61 aa). The H-T-H motif DNA-binding region spans 269–294; the sequence is PKAVKKLMNVEGLTIYHVKSHLQKYR. The segment at 301–327 is disordered; sequence EKKEEKRTDNSEEKKLALSKSEADEKK. Positions 334–354 are coiled coil; it reads TEALRMQMEVQKQLHEQLEVQ. Residues 347 to 352 carry the LHEQLE motif; it reads LHEQLE. Positions 376-449 are disordered; the sequence is RKTGRWISSS…NIAESEDPKR (74 aa). The span at 381 to 410 shows a compositional bias: polar residues; the sequence is WISSSSQTVLSPSDDSIPDSQNMSKTKASS.

This sequence belongs to the MYB-CC family.

The protein resides in the nucleus. This chain is Myb family transcription factor PHL6, found in Arabidopsis thaliana (Mouse-ear cress).